We begin with the raw amino-acid sequence, 613 residues long: Protein CER1-like 2 (613 aa).

A run of 6 helical transmembrane segments spans residues 13–33, 44–64, 95–115, 122–142, 182–202, and 322–342; these read WTPL…DSIY, LLIV…ISLS, IIFN…TSTI, GVIL…YWFH, LILG…VVSI, and YLFL…SFSF. One can recognise a Fatty acid hydroxylase domain in the interval 134–268; it reads VEFIYYWFHR…MPMYDYIYGT (135 aa).

The protein belongs to the sterol desaturase family. In terms of tissue distribution, not detected in any tissues.

It localises to the membrane. The sequence is that of Protein CER1-like 2 from Arabidopsis thaliana (Mouse-ear cress).